The primary structure comprises 688 residues: Glycine--tRNA ligase beta subunit (688 aa).

Belongs to the class-II aminoacyl-tRNA synthetase family. In terms of assembly, tetramer of two alpha and two beta subunits.

The protein localises to the cytoplasm. It catalyses the reaction tRNA(Gly) + glycine + ATP = glycyl-tRNA(Gly) + AMP + diphosphate. The polypeptide is Glycine--tRNA ligase beta subunit (Syntrophotalea carbinolica (strain DSM 2380 / NBRC 103641 / GraBd1) (Pelobacter carbinolicus)).